The primary structure comprises 241 residues: Uracil-DNA glycosylase (241 aa).

Asp-71 (proton acceptor) is an active-site residue.

Belongs to the uracil-DNA glycosylase (UDG) superfamily. UNG family.

The protein resides in the cytoplasm. The catalysed reaction is Hydrolyzes single-stranded DNA or mismatched double-stranded DNA and polynucleotides, releasing free uracil.. In terms of biological role, excises uracil residues from the DNA which can arise as a result of misincorporation of dUMP residues by DNA polymerase or due to deamination of cytosine. The chain is Uracil-DNA glycosylase from Xanthomonas euvesicatoria pv. vesicatoria (strain 85-10) (Xanthomonas campestris pv. vesicatoria).